We begin with the raw amino-acid sequence, 1502 residues long: Leucine-rich repeat-containing protein 9 (1502 aa).

LRR repeat units lie at residues 53–79 (FPNLTQLILVGQNIHCIAGLESCHFLK), 97–119 (CADLQKLYLYHNEISVIEGLENL), 120–141 (LKLEVLWLNNNQINVIEGLDMM), 142–164 (QNLKELNLANNLIHSIGESLDPN), 166–188 (QLERLNLSGNKISSFKELTNLAR), 224–247 (LQRLDTYDVSEKQIKNLAESTVVK), 296–320 (EHELTDMKSSGNMQANIPISNKFHE), 699–721 (YSQITVLNLHGNSLSKLKDISRL), 722–744 (NGLRKLIISFNEFSSLEDVSYLT), 746–764 (LEYLDASHNQVITLEGFKG), 765–790 (LGKLKYLDLSWNKLTNSREDLHILRK), 792–814 (AIQLSSLDIRYNFWQKPASVLKD), 822–849 (LTHLNGVTITEDEISEALQISSGSRITQ), 894–916 (YTKITSLTLDSQNLVRITNLEKL), 917–938 (VNLRWASFSSNHLTKIEGLEHC), 939–960 (VNLEELNLDDNSISKLEGLSKL), 961–983 (TKLRRLSINNNLLAGFDRHVIES), 985–1009 (SHLHFLSAENNNISSLAGLQRGYKL), 1011–1030 (ELYLSNNCISSNQEIYSLKG), 1031–1053 (LNNLVILDMWGNPILLKHENYRL), 1100–1123 (FTELQDLNWRTSSIRSIDLVPADH), 1124–1146 (FRNVQTVNLENNNLTSFSGLIFL), 1147–1170 (PNIKNLYLNHNRIESILPQQKSQS), 1209–1232 (MQSLEVLHLGYNGINSLPMLQLGR), 1234–1255 (RNLKSLYLQGNEISHVEGLENL), 1256–1278 (QFLRELVLDHNRIKAIAETSFAK), 1280–1301 (NSLVSLNLEENRLRDLNNLPPL), 1302–1325 (LKLRKLLIGSNKIQEISEIEKLEV), and 1327–1351 (PALVELSISGNPISRKPFLRNLLVV). The segment at 317-342 (KFHENNCDTEESNSQQSSERRKNNSD) is disordered. Over residues 1479-1496 (TQQSGQARSQQKHPFNQE) the composition is skewed to polar residues. The interval 1479–1502 (TQQSGQARSQQKHPFNQENEGRCV) is disordered.

The polypeptide is Leucine-rich repeat-containing protein 9 (lrrc9) (Xenopus tropicalis (Western clawed frog)).